We begin with the raw amino-acid sequence, 86 residues long: Large ribosomal subunit protein bL31 (86 aa).

Positions 16, 18, 38, and 41 each coordinate Zn(2+).

The protein belongs to the bacterial ribosomal protein bL31 family. Type A subfamily. As to quaternary structure, part of the 50S ribosomal subunit. Zn(2+) is required as a cofactor.

Its function is as follows. Binds the 23S rRNA. The sequence is that of Large ribosomal subunit protein bL31 from Acidothermus cellulolyticus (strain ATCC 43068 / DSM 8971 / 11B).